Here is a 156-residue protein sequence, read N- to C-terminus: Small ribosomal subunit protein uS7 (156 aa).

This sequence belongs to the universal ribosomal protein uS7 family. In terms of assembly, part of the 30S ribosomal subunit. Contacts proteins S9 and S11.

In terms of biological role, one of the primary rRNA binding proteins, it binds directly to 16S rRNA where it nucleates assembly of the head domain of the 30S subunit. Is located at the subunit interface close to the decoding center, probably blocks exit of the E-site tRNA. In Neisseria gonorrhoeae (strain ATCC 700825 / FA 1090), this protein is Small ribosomal subunit protein uS7.